A 279-amino-acid chain; its full sequence is Protein K1 (279 aa).

An N-terminal signal peptide occupies residues 1–18; sequence MFLYVVCSLAVCFRGLLS. Residues 19–220 are Extracellular-facing; it reads LSLQSSPNLC…TYLYIQEHLL (202 aa). Residues 221-241 traverse the membrane as a helical segment; that stretch reads VFMTLVALIGTMCGILGTIIF. Topologically, residues 242–279 are cytoplasmic; that stretch reads AHCQKQRDSNKTVPQQLQDYYSLHDLCTEDYTQPVDWY.

As to quaternary structure, homooligomer.

It localises to the host membrane. Its function is as follows. Promotes host cell survival pathways and may contribute to pathogenesis by preventing infected cells from undergoing apoptosis. Acts in host B-cells by mimicking the activated B-cell receptor complex. The cytoplasmic tail of K1 can induce the phosphorylation of a number of different kinases, leading to the activation of survival signaling pathways. The protein is Protein K1 (K1) of Human herpesvirus 8 type P (isolate GK18) (HHV-8).